A 31-amino-acid chain; its full sequence is Chymotrypsin (31 aa).

A Peptidase S1 domain is found at 1–31 (IVGGVEAVPGVWPYQAALFIIDMYFCGGSLI).

The protein belongs to the peptidase S1 family.

The protein localises to the secreted. Its subcellular location is the extracellular space. It catalyses the reaction Preferential cleavage: Tyr-|-Xaa, Trp-|-Xaa, Phe-|-Xaa, Leu-|-Xaa.. In Penaeus monodon (Giant tiger prawn), this protein is Chymotrypsin.